Here is a 62-residue protein sequence, read N- to C-terminus: Rubredoxin-2 (62 aa).

The 52-residue stretch at 7–58 (MWRCQMVNCGYVYDPDRGDKRRKVPAGTKFEDLPEDWRCPVCGAGKKSFRRL) folds into the Rubredoxin-like domain. Cysteine 10, cysteine 15, cysteine 45, and cysteine 48 together coordinate Fe cation.

Belongs to the rubredoxin family. Monomer. The cofactor is Fe(3+).

Functionally, rubredoxin is a small nonheme, iron protein lacking acid-labile sulfide. Its single Fe, chelated to 4 Cys, functions as an electron acceptor and may also stabilize the conformation of the molecule. The polypeptide is Rubredoxin-2 (rd2) (Desulfovibrio desulfuricans (strain ATCC 27774 / DSM 6949 / MB)).